A 356-amino-acid polypeptide reads, in one-letter code: Histidinol-phosphate aminotransferase (356 aa).

K214 is subject to N6-(pyridoxal phosphate)lysine.

This sequence belongs to the class-II pyridoxal-phosphate-dependent aminotransferase family. Histidinol-phosphate aminotransferase subfamily. Homodimer. Pyridoxal 5'-phosphate is required as a cofactor.

It catalyses the reaction L-histidinol phosphate + 2-oxoglutarate = 3-(imidazol-4-yl)-2-oxopropyl phosphate + L-glutamate. It participates in amino-acid biosynthesis; L-histidine biosynthesis; L-histidine from 5-phospho-alpha-D-ribose 1-diphosphate: step 7/9. The sequence is that of Histidinol-phosphate aminotransferase from Escherichia coli O45:K1 (strain S88 / ExPEC).